The chain runs to 1058 residues: Isoleucine--tRNA ligase (1058 aa).

The 'HIGH' region signature appears at 48-58 (PYTTGHIHLGT). The 'KMSKS' region signature appears at 596–600 (KMSKS). Lysine 599 provides a ligand contact to ATP.

Belongs to the class-I aminoacyl-tRNA synthetase family. IleS type 2 subfamily. Monomer. It depends on Zn(2+) as a cofactor.

It localises to the cytoplasm. It catalyses the reaction tRNA(Ile) + L-isoleucine + ATP = L-isoleucyl-tRNA(Ile) + AMP + diphosphate. Its function is as follows. Catalyzes the attachment of isoleucine to tRNA(Ile). As IleRS can inadvertently accommodate and process structurally similar amino acids such as valine, to avoid such errors it has two additional distinct tRNA(Ile)-dependent editing activities. One activity is designated as 'pretransfer' editing and involves the hydrolysis of activated Val-AMP. The other activity is designated 'posttransfer' editing and involves deacylation of mischarged Val-tRNA(Ile). In Methanosarcina mazei (strain ATCC BAA-159 / DSM 3647 / Goe1 / Go1 / JCM 11833 / OCM 88) (Methanosarcina frisia), this protein is Isoleucine--tRNA ligase.